The primary structure comprises 453 residues: Glutamate--tRNA ligase 2 (453 aa).

Residues 10 to 20 (PSPTGFLHIGG) carry the 'HIGH' region motif. The 'KMSKS' region motif lies at 232 to 236 (KLSKR). K235 serves as a coordination point for ATP.

It belongs to the class-I aminoacyl-tRNA synthetase family. Glutamate--tRNA ligase type 1 subfamily. Monomer.

The protein localises to the cytoplasm. It carries out the reaction tRNA(Glu) + L-glutamate + ATP = L-glutamyl-tRNA(Glu) + AMP + diphosphate. Catalyzes the attachment of glutamate to tRNA(Glu) in a two-step reaction: glutamate is first activated by ATP to form Glu-AMP and then transferred to the acceptor end of tRNA(Glu). The polypeptide is Glutamate--tRNA ligase 2 (Wolbachia sp. subsp. Brugia malayi (strain TRS)).